A 902-amino-acid chain; its full sequence is Transcription factor FPSE_08121 (902 aa).

Residues 1–47 (MVSPDNRPGTQGPSASAHAHDSRVPRKRPGSWDNNPSTAGNRAVKKR) are disordered. Residues 52–81 (CVSCRDRKVRCDVVNGGPPCTNCRLDDVDC) constitute a DNA-binding region (zn(2)-C6 fungal-type). Disordered regions lie at residues 92–189 (NPAR…EAEQ), 208–234 (HCEQQPQPQPSQGAATRSTPSAQPANP), 258–277 (ATEAPPSSSRMDNVSASANT), and 820–839 (TGVALTGQRSRQPSAGPNMT). Residues 120-137 (TDADTAAPGPAPGSASAT) are compositionally biased toward low complexity. Over residues 168–177 (ETICDDDENE) the composition is skewed to acidic residues. Composition is skewed to polar residues over residues 178-187 (NNSWHNQQEA), 220-234 (GAATRSTPSAQPANP), 262-277 (PPSSSRMDNVSASANT), and 826-839 (GQRSRQPSAGPNMT).

It is found in the nucleus. In terms of biological role, transcription factor; part of the Fusarium detoxification of benzoxazolinone cluster involved in the degradation of benzoxazolinones produced by the host plant. Maize, wheat, and rye produce the 2 benzoxazinone phytoanticipins 2,4-dihy-droxy-7-methoxy-1,4-benzoxazin-3-one (DIMBOA) and 2,4-dihydroxy-1,4-benzoxazin-3-one (DIBOA) that, due to their inherent instability once released, spontaneously degrade to the more stable corresponding benzoxazolinones, 6-methoxy-2-benzoxazolinone (MBOA) and 2-benzoxazolinone (BOA), respectively. FPSE_08121 positively regulates the expression of the FBD cluster gene FPSE_08120 in response to 2-aminophenol (2-AP) treatment and contributes quantitatively to benzoxazolinone tolerance. This Fusarium pseudograminearum (strain CS3096) (Wheat and barley crown-rot fungus) protein is Transcription factor FPSE_08121.